The sequence spans 303 residues: Ribosomal protein uL3 glutamine methyltransferase (303 aa).

Belongs to the protein N5-glutamine methyltransferase family. PrmB subfamily.

The enzyme catalyses L-glutaminyl-[ribosomal protein uL3] + S-adenosyl-L-methionine = N(5)-methyl-L-glutaminyl-[ribosomal protein uL3] + S-adenosyl-L-homocysteine + H(+). Its function is as follows. Methylates large ribosomal subunit protein uL3 on a specific glutamine residue. The chain is Ribosomal protein uL3 glutamine methyltransferase from Neisseria meningitidis serogroup B (strain ATCC BAA-335 / MC58).